A 336-amino-acid chain; its full sequence is Probable aquaglyceroporin-2 (336 aa).

The segment at 1–46 (MPISTINDSISESSVHKSSIPTKVEMSQNEKYSEAPSEAPTIPPPP) is disordered. Over 1–64 (MPISTINDSI…RENCQDAFSE (64 aa)) the chain is Cytoplasmic. The segment covering 9–19 (SISESSVHKSS) has biased composition (low complexity). Residues 65–85 (FFGTFVLLLFGDGVVAQVVLS) traverse the membrane as a helical segment. The Extracellular portion of the chain corresponds to 86 to 94 (RGTKGDYQS). A helical membrane pass occupies residues 95-115 (ISWGWGLGVMLGVYVGGKSGG). Residues 116-135 (HLNPAVTLANCLFRGHPWRK) are Cytoplasmic-facing. Positions 118–120 (NPA) match the NPA 1 motif. The helical transmembrane segment at 136–156 (FPIYAVAQVLGAMAAAAVVYG) threads the bilayer. Topologically, residues 157 to 195 (NYKSAIDAYEGGPGIRTVIGENATAGVFCTYPAEFMTRT) are extracellular. Residue Asn-178 is glycosylated (N-linked (GlcNAc...) asparagine). The helical transmembrane segment at 196 to 216 (GMFFSEFIASTILQFVIFAMA) threads the bilayer. Over 217–223 (DSANIGA) the chain is Cytoplasmic. The chain crosses the membrane as a helical span at residues 224–244 (GPLMPLGLFFLIFGIGACFGW). The Extracellular portion of the chain corresponds to 245 to 280 (ETGYAINLARDFGPRLVSYMLGYGSEVWSAGGYYFW). The short motif at 251 to 253 (NLA) is the NPA 2 element. Residues 281–301 (IPMVAPFFGCAFGGFLYDVFI) traverse the membrane as a helical segment. Residues 302–336 (YTGPSPINTPGMGFGRLVSPRRSTWSNTYNANSPV) lie on the Cytoplasmic side of the membrane.

Belongs to the MIP/aquaporin (TC 1.A.8) family.

The protein localises to the membrane. The enzyme catalyses H2O(in) = H2O(out). It carries out the reaction glycerol(in) = glycerol(out). Probable water/glycerol channel that may have redundant functions with FgAQP4. The sequence is that of Probable aquaglyceroporin-2 from Gibberella zeae (strain ATCC MYA-4620 / CBS 123657 / FGSC 9075 / NRRL 31084 / PH-1) (Wheat head blight fungus).